Here is a 128-residue protein sequence, read N- to C-terminus: Small ribosomal subunit protein uS11 (128 aa).

This sequence belongs to the universal ribosomal protein uS11 family. Part of the 30S ribosomal subunit. Interacts with proteins S7 and S18. Binds to IF-3.

Its function is as follows. Located on the platform of the 30S subunit, it bridges several disparate RNA helices of the 16S rRNA. Forms part of the Shine-Dalgarno cleft in the 70S ribosome. This chain is Small ribosomal subunit protein uS11, found in Methylococcus capsulatus (strain ATCC 33009 / NCIMB 11132 / Bath).